The following is a 1715-amino-acid chain: Ubiquitin carboxyl-terminal hydrolase 32 (1715 aa).

EF-hand domains lie at 161–196 (IPKN…ACRG) and 197–232 (PGVE…LLLV). 9 residues coordinate Ca(2+): Asp174, Asn176, Asp178, His180, Glu185, Asp210, Asp212, Asp214, and Glu221. One can recognise a DUSP domain in the interval 314-492 (QCKHMENDIV…DNLPLPRQVI (179 aa)). The segment at 393–429 (QHDSYSLGSGTGSASGSGSASSGISAGRHCGPVRPGP) is disordered. Positions 408 to 419 (GSGSASSGISAG) are enriched in low complexity. The region spanning 677 to 1675 (TGLHNLGNTC…AAYLLFYERK (999 aa)) is the USP domain. Catalysis depends on Cys686, which acts as the Nucleophile. Polar residues-rich tracts occupy residues 1103–1126 (TESN…SSLT) and 1150–1164 (YRTS…STGH). Disordered stretches follow at residues 1103-1213 (TESN…PHKA) and 1536-1569 (DEID…GNIL). Acidic residues predominate over residues 1171 to 1180 (DVDEQAEEGN). Over residues 1188 to 1209 (DQITTSQPETSSGVYSRRSSQP) the composition is skewed to polar residues. Over residues 1540–1549 (APSKEVKEEL) the composition is skewed to basic and acidic residues. The segment covering 1550 to 1559 (PNQTGSTKAT) has biased composition (polar residues). His1633 (proton acceptor) is an active-site residue.

Belongs to the peptidase C19 family. USP20/USP33 subfamily.

It carries out the reaction Thiol-dependent hydrolysis of ester, thioester, amide, peptide and isopeptide bonds formed by the C-terminal Gly of ubiquitin (a 76-residue protein attached to proteins as an intracellular targeting signal).. Its function is as follows. Deubiquitinating enzyme that acts as an inhibitor of mitophagy probably by counteracting the action of park. Possibly functions by hydrolyzing ubiquitin attached by park on target proteins, thereby reducing park's ability to drive mitophagy. This Drosophila melanogaster (Fruit fly) protein is Ubiquitin carboxyl-terminal hydrolase 32.